Reading from the N-terminus, the 329-residue chain is 4-hydroxythreonine-4-phosphate dehydrogenase (329 aa).

Positions 136 and 137 each coordinate substrate. The a divalent metal cation site is built by His166, His211, and His266. Lys274, Asn283, and Arg292 together coordinate substrate.

The protein belongs to the PdxA family. In terms of assembly, homodimer. The cofactor is Zn(2+). It depends on Mg(2+) as a cofactor. Co(2+) serves as cofactor.

It is found in the cytoplasm. It catalyses the reaction 4-(phosphooxy)-L-threonine + NAD(+) = 3-amino-2-oxopropyl phosphate + CO2 + NADH. It participates in cofactor biosynthesis; pyridoxine 5'-phosphate biosynthesis; pyridoxine 5'-phosphate from D-erythrose 4-phosphate: step 4/5. Functionally, catalyzes the NAD(P)-dependent oxidation of 4-(phosphooxy)-L-threonine (HTP) into 2-amino-3-oxo-4-(phosphooxy)butyric acid which spontaneously decarboxylates to form 3-amino-2-oxopropyl phosphate (AHAP). The polypeptide is 4-hydroxythreonine-4-phosphate dehydrogenase (Escherichia coli (strain 55989 / EAEC)).